The sequence spans 355 residues: Uroporphyrinogen decarboxylase (355 aa).

Substrate contacts are provided by residues 27-31, Asp-78, Tyr-155, Ser-210, and His-328; that span reads RQAGR.

Belongs to the uroporphyrinogen decarboxylase family. In terms of assembly, homodimer.

The protein resides in the cytoplasm. The catalysed reaction is uroporphyrinogen III + 4 H(+) = coproporphyrinogen III + 4 CO2. It participates in porphyrin-containing compound metabolism; protoporphyrin-IX biosynthesis; coproporphyrinogen-III from 5-aminolevulinate: step 4/4. Its function is as follows. Catalyzes the decarboxylation of four acetate groups of uroporphyrinogen-III to yield coproporphyrinogen-III. The sequence is that of Uroporphyrinogen decarboxylase from Azotobacter vinelandii (strain DJ / ATCC BAA-1303).